The sequence spans 136 residues: Probable 5-hydroxyisourate hydrolase ZK697.8 (136 aa).

The N-terminal stretch at 1 to 19 (MIKFLLFLAIAAATVISNA) is a signal peptide. 3 residues coordinate substrate: histidine 31, arginine 69, and tyrosine 133.

The protein belongs to the transthyretin family. 5-hydroxyisourate hydrolase subfamily. In terms of assembly, homotetramer.

The catalysed reaction is 5-hydroxyisourate + H2O = 5-hydroxy-2-oxo-4-ureido-2,5-dihydro-1H-imidazole-5-carboxylate + H(+). Catalyzes the hydrolysis of 5-hydroxyisourate (HIU) to 2-oxo-4-hydroxy-4-carboxy-5-ureidoimidazoline (OHCU). In Caenorhabditis elegans, this protein is Probable 5-hydroxyisourate hydrolase ZK697.8.